The following is a 351-amino-acid chain: Phosphoribosylformylglycinamidine cyclo-ligase (351 aa).

This sequence belongs to the AIR synthase family.

The protein localises to the cytoplasm. The enzyme catalyses 2-formamido-N(1)-(5-O-phospho-beta-D-ribosyl)acetamidine + ATP = 5-amino-1-(5-phospho-beta-D-ribosyl)imidazole + ADP + phosphate + H(+). It functions in the pathway purine metabolism; IMP biosynthesis via de novo pathway; 5-amino-1-(5-phospho-D-ribosyl)imidazole from N(2)-formyl-N(1)-(5-phospho-D-ribosyl)glycinamide: step 2/2. The protein is Phosphoribosylformylglycinamidine cyclo-ligase of Azotobacter vinelandii (strain DJ / ATCC BAA-1303).